A 567-amino-acid chain; its full sequence is Mitochondrial distribution and morphology protein 34 (567 aa).

In terms of domain architecture, SMP-LTD spans 1–224 (MSFKFNEESF…LPSALFNMSR (224 aa)). The span at 392 to 416 (NKATETSSNLNADSEITPVSSSHNA) shows a compositional bias: polar residues. A disordered region spans residues 392–453 (NKATETSSNL…NRSSSFTSSI (62 aa)). Residues 417 to 452 (TSSVNTITSLTTSSLGSTAGSSNSKNTNRSSSFTSS) show a composition bias toward low complexity.

The protein belongs to the MDM34 family. In terms of assembly, component of the ER-mitochondria encounter structure (ERMES) or MDM complex, composed of MMM1, MDM10, MDM12 and MDM34.

It is found in the mitochondrion outer membrane. Component of the ERMES/MDM complex, which serves as a molecular tether to connect the endoplasmic reticulum (ER) and mitochondria. Components of this complex are involved in the control of mitochondrial shape and protein biogenesis, and function in nonvesicular lipid trafficking between the ER and mitochondria. MDM34 is required for the interaction of the ER-resident membrane protein MMM1 and the outer mitochondrial membrane-resident beta-barrel protein MDM10. This chain is Mitochondrial distribution and morphology protein 34, found in Vanderwaltozyma polyspora (strain ATCC 22028 / DSM 70294 / BCRC 21397 / CBS 2163 / NBRC 10782 / NRRL Y-8283 / UCD 57-17) (Kluyveromyces polysporus).